We begin with the raw amino-acid sequence, 43 residues long: Bacteriocin leucocin-C (43 aa).

An intrachain disulfide couples Cys9 to Cys14.

Its subcellular location is the secreted. Its function is as follows. Inhibits a wide spectrum of lactic acid bacteria. This Leuconostoc mesenteroides protein is Bacteriocin leucocin-C.